Here is a 232-residue protein sequence, read N- to C-terminus: Putative N-acetylmannosamine-6-phosphate 2-epimerase (232 aa).

The protein belongs to the NanE family.

The catalysed reaction is an N-acyl-D-glucosamine 6-phosphate = an N-acyl-D-mannosamine 6-phosphate. Its pathway is amino-sugar metabolism; N-acetylneuraminate degradation; D-fructose 6-phosphate from N-acetylneuraminate: step 3/5. Converts N-acetylmannosamine-6-phosphate (ManNAc-6-P) to N-acetylglucosamine-6-phosphate (GlcNAc-6-P). The polypeptide is Putative N-acetylmannosamine-6-phosphate 2-epimerase (Corynebacterium glutamicum (strain R)).